The primary structure comprises 607 residues: Tyrosine-protein kinase RYK (607 aa).

Positions 1–20 (MRGAARLGRPGRSCLPGARG) are disordered. Positions 1-25 (MRGAARLGRPGRSCLPGARGLRAPP) are cleaved as a signal peptide. Residues 26–227 (PPPLLLLLAL…VHAAPTTSTR (202 aa)) lie on the Extracellular side of the membrane. Residues 66–194 (LYLSEDEVRR…VLNFKRRKMC (129 aa)) form the WIF domain. N-linked (GlcNAc...) asparagine glycans are attached at residues Asn139, Asn174, Asn178, Asn182, and Asn209. Cys159 and Cys194 are disulfide-bonded. A helical transmembrane segment spans residues 228–248 (VFYISVGVCCAVIFLVAIILA). Over 249–607 (VLHLHSMKRI…EFHAALGAYV (359 aa)) the chain is Cytoplasmic. Over residues 266–282 (ASSSSQGLSQPSTQTTQ) the composition is skewed to low complexity. Residues 266–290 (ASSSSQGLSQPSTQTTQYLRADTPN) form a disordered region. The 274-residue stretch at 330 to 603 (ITLKDVLQEG…QCLTEFHAAL (274 aa)) folds into the Protein kinase domain. Residues 336–344 (LQEGTFGRI) and Lys364 each bind ATP. The Proton acceptor role is filled by Asp465. Tyr495 is subject to Phosphotyrosine; by autocatalysis.

Belongs to the protein kinase superfamily. Tyr protein kinase family. Interacts with DVL1 (via PDZ domain). Proteolytically cleaved, in part by presenilin, in response to WNT3 stimulation. Cleavage occurs during neuronal differentiation. As to expression, observed in all the tissues examined.

The protein localises to the membrane. The protein resides in the nucleus. Its subcellular location is the cytoplasm. It catalyses the reaction L-tyrosyl-[protein] + ATP = O-phospho-L-tyrosyl-[protein] + ADP + H(+). May be a coreceptor along with FZD8 of Wnt proteins, such as WNT1, WNT3, WNT3A and WNT5A. Involved in neuron differentiation, axon guidance, corpus callosum establishment and neurite outgrowth. In response to WNT3 stimulation, receptor C-terminal cleavage occurs in its transmembrane region and allows the C-terminal intracellular product to translocate from the cytoplasm to the nucleus where it plays a crucial role in neuronal development. The chain is Tyrosine-protein kinase RYK from Homo sapiens (Human).